Consider the following 292-residue polypeptide: MKKVRKAIIPAAGLGTRFLPATKAMPKEMLPIVDKPTIQYIIEEAVEAGIEDIIIVTGKSKRAIEDHFDYSPELERNLEEKGKTELLEKVKKASNLADIHYIRQKEPKGLGHAVWCARNFIGDEPFAVLLGDDIVQAETPGLRQLMDEYEKTLSSIIGVQQVPEEETHRYGIIDPLTSEGRRYQVKNFVEKPPKGTAPSNLAILGRYVFTPEIFMYLEEQQVGAGGEIQLTDAIQKLNEIQRVFAYDFEGKRYDVGEKLGFITTTLEFAMQDKELRDQLVPFMEGLLNKEEI.

Belongs to the UDPGP type 2 family. In terms of assembly, interacts with FloT.

The protein resides in the cell membrane. It localises to the membrane raft. It catalyses the reaction alpha-D-glucose 1-phosphate + UTP + H(+) = UDP-alpha-D-glucose + diphosphate. It functions in the pathway glycolipid metabolism; diglucosyl-diacylglycerol biosynthesis. Catalyzes the formation of UDP-glucose from glucose-1-phosphate and UTP. This is an intermediate step in the biosynthesis of diglucosyl-diacylglycerol (Glc2-DAG), i.e. the predominant glycolipid found in B.subtilis membrane, which is also used as a membrane anchor for lipoteichoic acid (LTA). Has a role in the biosynthesis of all phosphate-containing envelope polymers, since UDP-glucose serves as a glucosyl donor not only for the biosynthesis of LTA but also for wall teichoic acids (WTAs). Is required for biofilm formation. This is likely due to another role of UDP-glucose, which might also act as a metabolic signal regulating biofilm formation or may be involved in some unknown biosynthetic pathway essential for biofilm formation, e.g. the synthesis of an exopolysaccharide. This Bacillus subtilis (strain 168) protein is UTP--glucose-1-phosphate uridylyltransferase (gtaB).